The chain runs to 446 residues: Phosphoglucosamine mutase (446 aa).

Serine 102 serves as the catalytic Phosphoserine intermediate. Mg(2+) contacts are provided by serine 102, aspartate 241, aspartate 243, and aspartate 245. The residue at position 102 (serine 102) is a Phosphoserine.

It belongs to the phosphohexose mutase family. Mg(2+) is required as a cofactor. Activated by phosphorylation.

It carries out the reaction alpha-D-glucosamine 1-phosphate = D-glucosamine 6-phosphate. Functionally, catalyzes the conversion of glucosamine-6-phosphate to glucosamine-1-phosphate. The chain is Phosphoglucosamine mutase from Yersinia enterocolitica serotype O:8 / biotype 1B (strain NCTC 13174 / 8081).